Reading from the N-terminus, the 282-residue chain is Structure-specific endonuclease subunit slx1 (282 aa).

A GIY-YIG domain is found at G7–K97. Residues C191–C243 form an SLX1-type zinc finger.

This sequence belongs to the SLX1 family. In terms of assembly, forms a heterodimer with slx4. The cofactor is a divalent metal cation.

The protein resides in the nucleus. Catalytic subunit of the slx1-slx4 structure-specific endonuclease that resolves DNA secondary structures generated during DNA repair and recombination. Has endonuclease activity towards branched DNA substrates, introducing single-strand cuts in duplex DNA close to junctions with ss-DNA. This chain is Structure-specific endonuclease subunit slx1 (slx1a), found in Xenopus laevis (African clawed frog).